A 3432-amino-acid polypeptide reads, in one-letter code: Genome polyprotein (3432 aa).

The interval Thr-2 to Asn-15 is interaction with host EXOC1. At Thr-2–Glu-109 the chain is on the cytoplasmic side. Residues Leu-37–Val-72 are hydrophobic; homodimerization of capsid protein C. Positions Gly-106–Ala-127 are cleaved as a propeptide — ER anchor for the capsid protein C, removed in mature form by serine protease NS3. Residues Gly-110–Leu-130 traverse the membrane as a helical segment. Residues Ser-131–Asn-253 lie on the Extracellular side of the membrane. Residue Asn-142 is glycosylated (N-linked (GlcNAc...) asparagine; by host). The helical transmembrane segment at Trp-254 to Ser-274 threads the bilayer. The Cytoplasmic segment spans residues Asn-275–Arg-279. A helical transmembrane segment spans residues Val-280–Ser-294. Residues Phe-295–Leu-746 lie on the Extracellular side of the membrane. 6 cysteine pairs are disulfide-bonded: Cys-297–Cys-324, Cys-354–Cys-410, Cys-354–Cys-415, Cys-368–Cys-399, Cys-386–Cys-410, and Cys-386–Cys-415. Residues Asp-392–Gly-405 form a fusion peptide region. A glycan (N-linked (GlcNAc...) asparagine; by host) is linked at Asn-448. 2 cysteine pairs are disulfide-bonded: Cys-484-Cys-581 and Cys-598-Cys-629. The helical transmembrane segment at Phe-747–Val-767 threads the bilayer. Topologically, residues Asn-768–Ser-773 are cytoplasmic. A helical membrane pass occupies residues Ile-774–Ala-794. At Asp-795 to Asp-1219 the chain is on the extracellular side. 6 disulfide bridges follow: Cys-798–Cys-809, Cys-849–Cys-937, Cys-973–Cys-1017, Cys-1074–Cys-1123, Cys-1085–Cys-1106, and Cys-1107–Cys-1110. Asn-924 and Asn-1001 each carry an N-linked (GlcNAc...) asparagine; by host glycan. The chain crosses the membrane as a helical span at residues Val-1220–Met-1240. Over Leu-1241–Asn-1250 the chain is Cytoplasmic. The chain crosses the membrane as a helical span at residues Val-1251 to Val-1271. His-1272 is a topological domain (lumenal). The helical transmembrane segment at Gly-1273–Thr-1293 threads the bilayer. Residues Ser-1294–Arg-1309 lie on the Cytoplasmic side of the membrane. Residues Ala-1310–His-1330 traverse the membrane as a helical segment. The Lumenal segment spans residues Glu-1331–Gly-1341. The chain crosses the membrane as a helical span at residues Ala-1342–Ala-1362. The Cytoplasmic portion of the chain corresponds to Gly-1363 to Gly-1374. Interaction with human SPCS1 regions lie at residues Gly-1374–Thr-1423 and Phe-1458–Gly-1505. The chain crosses the membrane as a helical span at residues Trp-1375–Ala-1395. Residues Glu-1396–Asp-1398 lie on the Lumenal side of the membrane. A helical membrane pass occupies residues Ile-1399 to Ser-1419. The Cytoplasmic segment spans residues Gly-1420–Ser-1476. Positions Leu-1427–Val-1466 are interacts with and activates NS3 protease. Positions Cys-1477–Leu-1497 form an intramembrane region, helical. Over Thr-1498 to Ala-2173 the chain is Cytoplasmic. One can recognise a Peptidase S7 domain in the interval Gly-1505–Ala-1682. Residues His-1555, Asp-1579, and Ser-1639 each act as charge relay system; for serine protease NS3 activity in the active site. The Helicase ATP-binding domain occupies Pro-1685–Gln-1841. The important for RNA-binding stretch occupies residues Arg-1689–Gln-1692. Position 1698–1705 (Leu-1698–Thr-1705) interacts with ATP. Positions Asp-1789 to His-1792 match the DEAH box motif. Residues Gly-1852–Glu-2017 enclose the Helicase C-terminal domain. An N6-acetyllysine; by host modification is found at Lys-1893. The interval Asn-1950–Gln-1972 is disordered. Residues Glu-2168–Asp-2172 are regulates the ATPase activity of NS3 helicase. The helical transmembrane segment at Leu-2174–Met-2194 threads the bilayer. At Met-2195–Gly-2199 the chain is on the lumenal side. Positions Ile-2200–Ala-2220 form an intramembrane region, helical. Glu-2221 is a topological domain (lumenal). Residues Val-2222–Ile-2242 traverse the membrane as a helical segment. The Cytoplasmic segment spans residues Pro-2243–Ala-2257. A helical membrane pass occupies residues Val-2258–Leu-2278. Over Glu-2279–Ala-2311 the chain is Lumenal. The segment at residues Thr-2312–Ile-2332 is an intramembrane region (helical). At Thr-2333 to Gly-2368 the chain is on the lumenal side. Residues Leu-2369–Leu-2389 traverse the membrane as a helical segment. The Cytoplasmic segment spans residues Ala-2390–Lys-2444. Residues Val-2445 to Thr-2465 form a helical membrane-spanning segment. At Thr-2466–Glu-2469 the chain is on the lumenal side. Residues Ala-2470–Trp-2490 traverse the membrane as a helical segment. The Cytoplasmic portion of the chain corresponds to Asn-2491–Ile-3432. One can recognise an mRNA cap 0-1 NS5-type MT domain in the interval Gly-2528–Ala-2793. An S-adenosyl-L-methionine-binding site is contributed by Ser-2583. At Ser-2583 the chain carries Phosphoserine. Lys-2588 (for 2'-O-MTase activity) is an active-site residue. Residues Gly-2613, Trp-2614, Thr-2631, Lys-2632, Asp-2658, and Val-2659 each contribute to the S-adenosyl-L-methionine site. Asp-2673 functions as the For 2'-O-MTase activity in the catalytic mechanism. Residue Ile-2674 participates in S-adenosyl-L-methionine binding. Residues Lys-2709 and Glu-2745 each act as for 2'-O-MTase activity in the active site. Tyr-2747 contributes to the S-adenosyl-L-methionine binding site. Zn(2+) is bound by residues Glu-2967, His-2971, Cys-2976, and Cys-2979. A RdRp catalytic domain is found at Gly-3057–Ala-3209. Zn(2+) is bound by residues His-3244, Cys-3260, and Cys-3379.

In the N-terminal section; belongs to the class I-like SAM-binding methyltransferase superfamily. mRNA cap 0-1 NS5-type methyltransferase family. As to quaternary structure, homodimer. Interacts (via N-terminus) with host EXOC1 (via C-terminus); this interaction results in EXOC1 degradation through the proteasome degradation pathway. Forms heterodimers with envelope protein E in the endoplasmic reticulum and Golgi. In terms of assembly, homodimer; in the endoplasmic reticulum and Golgi. Interacts with protein prM. Interacts with non-structural protein 1. Interacts with host HSPA5. As to quaternary structure, homodimer; Homohexamer when secreted. Interacts with envelope protein E. NS1 interacts with NS4B. Interacts with host complement protein CFH; this interaction leads to the degradation of C3. Interacts (via N-terminus) with serine protease NS3. In terms of assembly, forms a heterodimer with serine protease NS3. May form homooligomers. Interacts with human SPCS1. As to quaternary structure, forms a heterodimer with NS2B. Interacts with non-structural protein 2A (via N-terminus). Interacts with NS4B. Interacts with unphosphorylated RNA-directed RNA polymerase NS5; this interaction stimulates RNA-directed RNA polymerase NS5 guanylyltransferase activity. Interacts with host ILF2. Interacts with serine protease NS3. In terms of assembly, homodimer. Interacts with host STAT2; this interaction inhibits the phosphorylation of the latter, and, when all viral proteins are present (polyprotein), targets STAT2 for degradation. Interacts with serine protease NS3. Requires Mn(2+) as cofactor. Mg(2+) is required as a cofactor. In terms of processing, specific enzymatic cleavages in vivo yield mature proteins. Cleavages in the lumen of endoplasmic reticulum are performed by host signal peptidase, whereas cleavages in the cytoplasmic side are performed by serine protease NS3. Signal cleavage at the 2K-4B site requires a prior NS3 protease-mediated cleavage at the 4A-2K site. Post-translationally, cleaved in post-Golgi vesicles by a host furin, releasing the mature small envelope protein M, and peptide pr. This cleavage is incomplete as up to 30% of viral particles still carry uncleaved prM. N-glycosylated. In terms of processing, N-glycosylated. The excreted form is glycosylated and this is required for efficient secretion of the protein from infected cells. Post-translationally, acetylated by host KAT5. Acetylation modulates NS3 RNA-binding and unwinding activities and plays an important positive role for viral replication. Phosphorylated on serines residues. This phosphorylation may trigger NS5 nuclear localization.

It is found in the host endoplasmic reticulum membrane. The protein localises to the virion. It localises to the host nucleus. Its subcellular location is the host cytoplasm. The protein resides in the host perinuclear region. It is found in the secreted. The protein localises to the virion membrane. It localises to the host cell surface. The catalysed reaction is Selective hydrolysis of -Xaa-Xaa-|-Yaa- bonds in which each of the Xaa can be either Arg or Lys and Yaa can be either Ser or Ala.. It carries out the reaction RNA(n) + a ribonucleoside 5'-triphosphate = RNA(n+1) + diphosphate. The enzyme catalyses a ribonucleoside 5'-triphosphate + H2O = a ribonucleoside 5'-diphosphate + phosphate + H(+). It catalyses the reaction ATP + H2O = ADP + phosphate + H(+). The catalysed reaction is a 5'-end (5'-triphosphoguanosine)-ribonucleoside in mRNA + S-adenosyl-L-methionine = a 5'-end (N(7)-methyl 5'-triphosphoguanosine)-ribonucleoside in mRNA + S-adenosyl-L-homocysteine. It carries out the reaction a 5'-end (N(7)-methyl 5'-triphosphoguanosine)-ribonucleoside in mRNA + S-adenosyl-L-methionine = a 5'-end (N(7)-methyl 5'-triphosphoguanosine)-(2'-O-methyl-ribonucleoside) in mRNA + S-adenosyl-L-homocysteine + H(+). Plays a role in virus budding by binding to the cell membrane and gathering the viral RNA into a nucleocapsid that forms the core of a mature virus particle. During virus entry, may induce genome penetration into the host cytoplasm after hemifusion induced by the surface proteins. Can migrate to the cell nucleus where it modulates host functions. Overcomes the anti-viral effects of host EXOC1 by sequestering and degrading the latter through the proteasome degradation pathway. In terms of biological role, inhibits RNA silencing by interfering with host Dicer. Functionally, prevents premature fusion activity of envelope proteins in trans-Golgi by binding to envelope protein E at pH 6.0. After virion release in extracellular space, gets dissociated from E dimers. Its function is as follows. Acts as a chaperone for envelope protein E during intracellular virion assembly by masking and inactivating envelope protein E fusion peptide. prM is the only viral peptide matured by host furin in the trans-Golgi network probably to avoid catastrophic activation of the viral fusion activity in acidic Golgi compartment prior to virion release. prM-E cleavage is inefficient, and many virions are only partially matured. These uncleaved prM would play a role in immune evasion. May play a role in virus budding. Exerts cytotoxic effects by activating a mitochondrial apoptotic pathway through M ectodomain. May display a viroporin activity. In terms of biological role, binds to host cell surface receptor and mediates fusion between viral and cellular membranes. Efficient virus attachment to cell is, at least in part, mediated by host HSPA5. Envelope protein is synthesized in the endoplasmic reticulum in the form of heterodimer with protein prM. They play a role in virion budding in the ER, and the newly formed immature particle is covered with 60 spikes composed of heterodimer between precursor prM and envelope protein E. The virion is transported to the Golgi apparatus where the low pH causes dissociation of PrM-E heterodimers and formation of E homodimers. prM-E cleavage is inefficient, and many virions are only partially matured. These uncleaved prM would play a role in immune evasion. Functionally, involved in immune evasion, pathogenesis and viral replication. Once cleaved off the polyprotein, is targeted to three destinations: the viral replication cycle, the plasma membrane and the extracellular compartment. Essential for viral replication. Required for formation of the replication complex and recruitment of other non-structural proteins to the ER-derived membrane structures. Excreted as a hexameric lipoparticle that plays a role against host immune response. Antagonizing the complement function. Binds to the host macrophages and dendritic cells. Inhibits signal transduction originating from Toll-like receptor 3 (TLR3). Its function is as follows. Component of the viral RNA replication complex that functions in virion assembly and antagonizes the host alpha/beta interferon antiviral response. Required cofactor for the serine protease function of NS3. May have membrane-destabilizing activity and form viroporins. In terms of biological role, displays three enzymatic activities: serine protease, NTPase and RNA helicase. NS3 serine protease, in association with NS2B, performs its autocleavage and cleaves the polyprotein at dibasic sites in the cytoplasm: C-prM, NS2A-NS2B, NS2B-NS3, NS3-NS4A, NS4A-2K and NS4B-NS5. NS3 RNA helicase binds RNA and unwinds dsRNA in the 3' to 5' direction. Functionally, regulates the ATPase activity of the NS3 helicase activity. NS4A allows NS3 helicase to conserve energy during unwinding. Its function is as follows. Functions as a signal peptide for NS4B and is required for the interferon antagonism activity of the latter. Induces the formation of ER-derived membrane vesicles where the viral replication takes place. Inhibits interferon (IFN)-induced host STAT1 phosphorylation and nuclear translocation, thereby preventing the establishment of cellular antiviral state by blocking the IFN-alpha/beta pathway. Inhibits STAT2 translocation in the nucleus after IFN-alpha treatment. In terms of biological role, replicates the viral (+) and (-) RNA genome. Performs the capping of genomes in the cytoplasm. NS5 methylates viral RNA cap at guanine N-7 and ribose 2'-O positions. Besides its role in RNA genome replication, also prevents the establishment of cellular antiviral state by blocking the interferon-alpha/beta (IFN-alpha/beta) signaling pathway. Inhibits host TYK2 and STAT2 phosphorylation, thereby preventing activation of JAK-STAT signaling pathway. The protein is Genome polyprotein of Japanese encephalitis virus (strain SA-14) (JEV).